Reading from the N-terminus, the 319-residue chain is Ribosomal large subunit pseudouridine synthase C (319 aa).

The 64-residue stretch at 20-83 (QRIDNFLRTQ…AEREEEAVSP (64 aa)) folds into the S4 RNA-binding domain. D144 is an active-site residue.

It belongs to the pseudouridine synthase RluA family.

It carries out the reaction uridine(955/2504/2580) in 23S rRNA = pseudouridine(955/2504/2580) in 23S rRNA. Functionally, responsible for synthesis of pseudouridine from uracil at positions 955, 2504 and 2580 in 23S ribosomal RNA. The chain is Ribosomal large subunit pseudouridine synthase C (rluC) from Escherichia coli O157:H7.